We begin with the raw amino-acid sequence, 635 residues long: DNA topoisomerase 4 subunit B (635 aa).

Residues Y5, N45, D72, 113–119 (GLHGVGA), and K340 contribute to the ATP site. The 116-residue stretch at 422 to 537 (RELFVVEGDS…KGHIYLALPP (116 aa)) folds into the Toprim domain. Residues E428, D502, and D504 each contribute to the Mg(2+) site.

Belongs to the type II topoisomerase family. ParE type 2 subfamily. As to quaternary structure, heterotetramer composed of ParC and ParE. Mg(2+) is required as a cofactor. The cofactor is Mn(2+). Ca(2+) serves as cofactor.

It carries out the reaction ATP-dependent breakage, passage and rejoining of double-stranded DNA.. Its function is as follows. Topoisomerase IV is essential for chromosome segregation. It relaxes supercoiled DNA. Performs the decatenation events required during the replication of a circular DNA molecule. The chain is DNA topoisomerase 4 subunit B from Mycoplasma pneumoniae (strain ATCC 29342 / M129 / Subtype 1) (Mycoplasmoides pneumoniae).